Consider the following 306-residue polypeptide: Ornithine carbamoyltransferase (306 aa).

Carbamoyl phosphate is bound by residues 46-49 (STRT), glutamine 73, arginine 97, and 124-127 (HPTQ). L-ornithine-binding positions include asparagine 156, aspartate 220, and 224 to 225 (SM). Carbamoyl phosphate-binding positions include 260–261 (CL) and arginine 288.

Belongs to the aspartate/ornithine carbamoyltransferase superfamily. OTCase family.

It is found in the cytoplasm. The catalysed reaction is carbamoyl phosphate + L-ornithine = L-citrulline + phosphate + H(+). Its pathway is amino-acid degradation; L-arginine degradation via ADI pathway; carbamoyl phosphate from L-arginine: step 2/2. Its function is as follows. Reversibly catalyzes the transfer of the carbamoyl group from carbamoyl phosphate (CP) to the N(epsilon) atom of ornithine (ORN) to produce L-citrulline. The sequence is that of Ornithine carbamoyltransferase from Campylobacter jejuni subsp. doylei (strain ATCC BAA-1458 / RM4099 / 269.97).